The sequence spans 334 residues: L-lactate dehydrogenase C chain (334 aa).

Residues 30–58 and Arg100 contribute to the NAD(+) site; that span reads GQVGMACAVTILLRELADELALVDVVEDK. Arg107, Asn139, and Arg170 together coordinate substrate. Asn139 is an NAD(+) binding site. The active-site Proton acceptor is His194. Thr249 contributes to the substrate binding site.

This sequence belongs to the LDH/MDH superfamily. LDH family. As to quaternary structure, homotetramer. Eye and liver.

It is found in the cytoplasm. The catalysed reaction is (S)-lactate + NAD(+) = pyruvate + NADH + H(+). Its pathway is fermentation; pyruvate fermentation to lactate; (S)-lactate from pyruvate: step 1/1. This Fundulus heteroclitus (Killifish) protein is L-lactate dehydrogenase C chain (ldhc).